Consider the following 242-residue polypeptide: ATP synthase subunit a (242 aa).

A run of 6 helical transmembrane segments spans residues 29–49 (SSIY…LAFY), 84–104 (FIPL…LGMT), 114–134 (IIVT…VGFV), 140–160 (FLTL…MIVI), 181–201 (MAGH…MIYL), and 203–223 (FLPI…AILQ).

Belongs to the ATPase A chain family. As to quaternary structure, F-type ATPases have 2 components, CF(1) - the catalytic core - and CF(0) - the membrane proton channel. CF(1) has five subunits: alpha(3), beta(3), gamma(1), delta(1), epsilon(1). CF(0) has three main subunits: a(1), b(2) and c(9-12). The alpha and beta chains form an alternating ring which encloses part of the gamma chain. CF(1) is attached to CF(0) by a central stalk formed by the gamma and epsilon chains, while a peripheral stalk is formed by the delta and b chains.

Its subcellular location is the cell membrane. Key component of the proton channel; it plays a direct role in the translocation of protons across the membrane. The protein is ATP synthase subunit a of Rickettsia africae (strain ESF-5).